Reading from the N-terminus, the 524-residue chain is Bifunctional purine biosynthesis protein PurH (524 aa).

Residues 1-149 (MSDPVIKRAL…KNNESVTVVT (149 aa)) form the MGS-like domain.

Belongs to the PurH family.

The enzyme catalyses (6R)-10-formyltetrahydrofolate + 5-amino-1-(5-phospho-beta-D-ribosyl)imidazole-4-carboxamide = 5-formamido-1-(5-phospho-D-ribosyl)imidazole-4-carboxamide + (6S)-5,6,7,8-tetrahydrofolate. It carries out the reaction IMP + H2O = 5-formamido-1-(5-phospho-D-ribosyl)imidazole-4-carboxamide. It functions in the pathway purine metabolism; IMP biosynthesis via de novo pathway; 5-formamido-1-(5-phospho-D-ribosyl)imidazole-4-carboxamide from 5-amino-1-(5-phospho-D-ribosyl)imidazole-4-carboxamide (10-formyl THF route): step 1/1. Its pathway is purine metabolism; IMP biosynthesis via de novo pathway; IMP from 5-formamido-1-(5-phospho-D-ribosyl)imidazole-4-carboxamide: step 1/1. In Chlorobium chlorochromatii (strain CaD3), this protein is Bifunctional purine biosynthesis protein PurH.